A 178-amino-acid polypeptide reads, in one-letter code: Peptide deformylase (178 aa).

Positions 102 and 144 each coordinate Fe cation. The active site involves glutamate 145. Histidine 148 serves as a coordination point for Fe cation.

This sequence belongs to the polypeptide deformylase family. It depends on Fe(2+) as a cofactor.

It catalyses the reaction N-terminal N-formyl-L-methionyl-[peptide] + H2O = N-terminal L-methionyl-[peptide] + formate. Functionally, removes the formyl group from the N-terminal Met of newly synthesized proteins. Requires at least a dipeptide for an efficient rate of reaction. N-terminal L-methionine is a prerequisite for activity but the enzyme has broad specificity at other positions. In Leptospira borgpetersenii serovar Hardjo-bovis (strain JB197), this protein is Peptide deformylase.